We begin with the raw amino-acid sequence, 361 residues long: Phosphate acyltransferase (361 aa).

The interval 342–361 is disordered; it reads ADGAAAEQGPTPRRTAPRQT.

Belongs to the PlsX family. As to quaternary structure, homodimer. Probably interacts with PlsY.

The protein localises to the cytoplasm. It catalyses the reaction a fatty acyl-[ACP] + phosphate = an acyl phosphate + holo-[ACP]. Its pathway is lipid metabolism; phospholipid metabolism. In terms of biological role, catalyzes the reversible formation of acyl-phosphate (acyl-PO(4)) from acyl-[acyl-carrier-protein] (acyl-ACP). This enzyme utilizes acyl-ACP as fatty acyl donor, but not acyl-CoA. The chain is Phosphate acyltransferase from Anaeromyxobacter sp. (strain K).